Here is a 487-residue protein sequence, read N- to C-terminus: MTELFIDGAWIAGSGPAFASRNPGTDAIAWQGDSASAADVDRAVASARRAFAGWSALDFEARCEIVKRFAALLTERKEAIATAIGRETGKPLWEARTEVAAMAAKVGISIQAYQERTGEKRQDMADGVAVLRHRPHGVVAVFGPYNFPGHLPNGHIVPALIAGNTVVFKPSELAPGVARATVEVWQEAGLPAGVLNLVQGEKDTGIALANHRQIDGLFFTGSSDTGTLLHRQFGGRPEIVLALEMGGNNPLVIGEVEDLDAAVHHTIQSAFLSAGQRCTCARRIFVPQGAFGERFLARLADVTSKITADVFDADPQPFMGAVISARAAAKLVDAQSRLIEQGAKPIIEMTQRDPRLGFVNASIIDVTGVANLPDEEHFGPLAQIVRYATFDEAIERANDTAFGLSAGLLADDAHAWEHFRRTIRAGIVNWNRPTNGASSAAPFGGTGRSGNHRPSAYYAADYCAYPMASVESTQLTLPASLSPGLHF.

Residue 221-226 (GSSDTG) coordinates NAD(+). Residues E244 and C278 contribute to the active site.

This sequence belongs to the aldehyde dehydrogenase family. AstD subfamily.

It catalyses the reaction N-succinyl-L-glutamate 5-semialdehyde + NAD(+) + H2O = N-succinyl-L-glutamate + NADH + 2 H(+). The protein operates within amino-acid degradation; L-arginine degradation via AST pathway; L-glutamate and succinate from L-arginine: step 4/5. Functionally, catalyzes the NAD-dependent reduction of succinylglutamate semialdehyde into succinylglutamate. The polypeptide is N-succinylglutamate 5-semialdehyde dehydrogenase (Burkholderia ambifaria (strain ATCC BAA-244 / DSM 16087 / CCUG 44356 / LMG 19182 / AMMD) (Burkholderia cepacia (strain AMMD))).